Reading from the N-terminus, the 336-residue chain is Tryptophan--tRNA ligase (336 aa).

ATP-binding positions include 13-15 (QPS) and 21-22 (GN). The 'HIGH' region motif lies at 14–22 (PSGNLTIGN). Residue aspartate 140 coordinates L-tryptophan. ATP contacts are provided by residues 152–154 (GQD), isoleucine 191, and 200–204 (KMSKS). A 'KMSKS' region motif is present at residues 200 to 204 (KMSKS).

It belongs to the class-I aminoacyl-tRNA synthetase family. As to quaternary structure, homodimer.

The protein localises to the cytoplasm. It carries out the reaction tRNA(Trp) + L-tryptophan + ATP = L-tryptophyl-tRNA(Trp) + AMP + diphosphate + H(+). Catalyzes the attachment of tryptophan to tRNA(Trp). The protein is Tryptophan--tRNA ligase of Buchnera aphidicola subsp. Schizaphis graminum (strain Sg).